A 524-amino-acid chain; its full sequence is Cytochrome P450 52A6 (524 aa).

The helical transmembrane segment at 17-34 (WYTVITLAALVFLISSNI) threads the bilayer. Position 472 (cysteine 472) interacts with heme.

Belongs to the cytochrome P450 family. Heme serves as cofactor.

It is found in the membrane. In terms of biological role, together with an NADPH cytochrome P450 the enzyme system catalyzes the terminal hydroxylation as the first step in the assimilation of alkanes and fatty acids. Preferentially hydroxylates hexadecane. This is Cytochrome P450 52A6 (CYP52A6) from Candida tropicalis (Yeast).